Consider the following 503-residue polypeptide: Anaerobic nitric oxide reductase flavorubredoxin (503 aa).

The tract at residues 30-210 is zinc metallo-hydrolase; that stretch reads LQGSSYNSYL…PFSRLVTAKI (181 aa). Fe cation contacts are provided by H79, E81, D83, H147, D166, and H227. One can recognise a Flavodoxin-like domain in the interval 254–393; sequence ITLFYDTMSN…ICREHGREIA (140 aa). FMN is bound by residues 260–264 and 342–369; these read TMSNN and AFGSYGWNGGAVDRIQTRLMDAGFETTL. The Rubredoxin-like domain occupies 451 to 502; the sequence is NGCMQCSVCQWIYDPALGEPMQDVTPGTMWSDVPDSFLCPECGLGKDVFNPI. Fe cation contacts are provided by C456, C459, C489, and C492.

It in the N-terminal section; belongs to the zinc metallo-hydrolase group 3 family. As to quaternary structure, homotetramer. It depends on Fe cation as a cofactor. FMN serves as cofactor.

It is found in the cytoplasm. It functions in the pathway nitrogen metabolism; nitric oxide reduction. Functionally, anaerobic nitric oxide reductase; uses NADH to detoxify nitric oxide (NO), protecting several 4Fe-4S NO-sensitive enzymes. Has at least 2 reductase partners, only one of which (NorW, flavorubredoxin reductase) has been identified. NO probably binds to the di-iron center; electrons enter from the NorW at rubredoxin and are transferred sequentially to the FMN center and the di-iron center. Also able to function as an aerobic oxygen reductase. This Pectobacterium carotovorum subsp. carotovorum (strain PC1) protein is Anaerobic nitric oxide reductase flavorubredoxin.